Consider the following 670-residue polypeptide: DNA ligase (670 aa).

NAD(+) is bound by residues 34–38, 83–84, and Glu-112; these read DAEYD and SL. Residue Lys-114 is the N6-AMP-lysine intermediate of the active site. Positions 135, 169, 285, and 309 each coordinate NAD(+). Zn(2+) is bound by residues Cys-403, Cys-406, Cys-421, and Cys-426. The BRCT domain occupies 589–670; it reads PASSVLAGKT…FLQEISREEQ (82 aa).

Belongs to the NAD-dependent DNA ligase family. LigA subfamily. Mg(2+) serves as cofactor. The cofactor is Mn(2+).

The enzyme catalyses NAD(+) + (deoxyribonucleotide)n-3'-hydroxyl + 5'-phospho-(deoxyribonucleotide)m = (deoxyribonucleotide)n+m + AMP + beta-nicotinamide D-nucleotide.. In terms of biological role, DNA ligase that catalyzes the formation of phosphodiester linkages between 5'-phosphoryl and 3'-hydroxyl groups in double-stranded DNA using NAD as a coenzyme and as the energy source for the reaction. It is essential for DNA replication and repair of damaged DNA. The chain is DNA ligase from Geobacillus thermodenitrificans (strain NG80-2).